Reading from the N-terminus, the 348-residue chain is tRNA N6-adenosine threonylcarbamoyltransferase (348 aa).

The Fe cation site is built by His115 and His119. Residues 138–142 (LVSGG), Asp171, Gly184, and Asn276 each bind substrate. Fe cation is bound at residue Asp304.

Belongs to the KAE1 / TsaD family. Fe(2+) serves as cofactor.

It localises to the cytoplasm. It carries out the reaction L-threonylcarbamoyladenylate + adenosine(37) in tRNA = N(6)-L-threonylcarbamoyladenosine(37) in tRNA + AMP + H(+). Required for the formation of a threonylcarbamoyl group on adenosine at position 37 (t(6)A37) in tRNAs that read codons beginning with adenine. Is involved in the transfer of the threonylcarbamoyl moiety of threonylcarbamoyl-AMP (TC-AMP) to the N6 group of A37, together with TsaE and TsaB. TsaD likely plays a direct catalytic role in this reaction. The chain is tRNA N6-adenosine threonylcarbamoyltransferase from Xylella fastidiosa (strain M23).